Consider the following 318-residue polypeptide: Acetyl-coenzyme A carboxylase carboxyl transferase subunit alpha (318 aa).

Positions 34-295 (DIEDQISQLR…KQAIKKDLSE (262 aa)) constitute a CoA carboxyltransferase C-terminal domain.

The protein belongs to the AccA family. In terms of assembly, acetyl-CoA carboxylase is a heterohexamer composed of biotin carboxyl carrier protein (AccB), biotin carboxylase (AccC) and two subunits each of ACCase subunit alpha (AccA) and ACCase subunit beta (AccD).

Its subcellular location is the cytoplasm. It carries out the reaction N(6)-carboxybiotinyl-L-lysyl-[protein] + acetyl-CoA = N(6)-biotinyl-L-lysyl-[protein] + malonyl-CoA. It functions in the pathway lipid metabolism; malonyl-CoA biosynthesis; malonyl-CoA from acetyl-CoA: step 1/1. In terms of biological role, component of the acetyl coenzyme A carboxylase (ACC) complex. First, biotin carboxylase catalyzes the carboxylation of biotin on its carrier protein (BCCP) and then the CO(2) group is transferred by the carboxyltransferase to acetyl-CoA to form malonyl-CoA. The chain is Acetyl-coenzyme A carboxylase carboxyl transferase subunit alpha from Colwellia psychrerythraea (strain 34H / ATCC BAA-681) (Vibrio psychroerythus).